Here is a 330-residue protein sequence, read N- to C-terminus: Phenylalanine--tRNA ligase alpha subunit (330 aa).

Position 255 (E255) interacts with Mg(2+).

Belongs to the class-II aminoacyl-tRNA synthetase family. Phe-tRNA synthetase alpha subunit type 1 subfamily. In terms of assembly, tetramer of two alpha and two beta subunits. It depends on Mg(2+) as a cofactor.

The protein localises to the cytoplasm. The catalysed reaction is tRNA(Phe) + L-phenylalanine + ATP = L-phenylalanyl-tRNA(Phe) + AMP + diphosphate + H(+). This Acinetobacter baumannii (strain SDF) protein is Phenylalanine--tRNA ligase alpha subunit.